The following is a 27-amino-acid chain: Zinc metalloproteinase multactivase catalytic subunit (27 aa).

Residues 12-27 enclose the Peptidase M12B domain; sequence FIELVIIVDHSXXTYK. Glu-14 contributes to the Ca(2+) binding site.

This sequence belongs to the venom metalloproteinase (M12B) family. P-III subfamily. P-IIId sub-subfamily. Heterodimer of a metalloproteinase subunit and a regulatory subunit comprising two homologous disulfide-linked lectins (AC P81798). The cofactor is Zn(2+). As to expression, expressed by the venom gland.

It is found in the secreted. This carinactivase-like calcium-dependent prothrombin (F2) activator activates prothrombin via recognition of the calcium ion bound conformation of its gamma-carboxyglutamic acid (GLA) domain, and the subsequent conversion of prothrombin to active thrombin is catalyzed by the catalytic subunit. This chain is Zinc metalloproteinase multactivase catalytic subunit, found in Echis multisquamatus (Central Asian sand viper).